A 359-amino-acid polypeptide reads, in one-letter code: Phospho-N-acetylmuramoyl-pentapeptide-transferase (359 aa).

A run of 10 helical transmembrane segments spans residues 3-23, 55-75, 80-100, 117-137, 156-176, 187-207, 231-251, 255-275, 280-300, and 334-354; these read QILI…PALI, VAII…GLAF, ISAS…VGFL, TAKT…ALGF, IATV…VVSA, LDGL…LITF, LAIV…WNAA, IFMG…ISVT, ILAV…VLQI, and FWLL…GEWL.

The protein belongs to the glycosyltransferase 4 family. MraY subfamily. Mg(2+) is required as a cofactor.

The protein localises to the cell membrane. The catalysed reaction is UDP-N-acetyl-alpha-D-muramoyl-L-alanyl-gamma-D-glutamyl-meso-2,6-diaminopimeloyl-D-alanyl-D-alanine + di-trans,octa-cis-undecaprenyl phosphate = di-trans,octa-cis-undecaprenyl diphospho-N-acetyl-alpha-D-muramoyl-L-alanyl-D-glutamyl-meso-2,6-diaminopimeloyl-D-alanyl-D-alanine + UMP. Its pathway is cell wall biogenesis; peptidoglycan biosynthesis. In terms of biological role, catalyzes the initial step of the lipid cycle reactions in the biosynthesis of the cell wall peptidoglycan: transfers peptidoglycan precursor phospho-MurNAc-pentapeptide from UDP-MurNAc-pentapeptide onto the lipid carrier undecaprenyl phosphate, yielding undecaprenyl-pyrophosphoryl-MurNAc-pentapeptide, known as lipid I. The chain is Phospho-N-acetylmuramoyl-pentapeptide-transferase from Mycobacterium avium (strain 104).